The following is a 369-amino-acid chain: MASTTLLQPALGLPSRVGPRSPLSLPKIPRVCTHTSAPSTSKYCDSSSVIESTLGRQTSVAGRPWLAPRPAPQQSRGDLLVSKSGAAGGMGAHGGGLGEPVDNWIKKLLVGVAAAYIGLVVLVPFLNVFVQAFAKGIIPFLEHCADPDFLHALKMTLMLAFVTVPLNTVFGTVAAINLTRNEFPGKVFLMSLLDLPFSISPVVTGLMLTLLYGRTGWFAALLRETGINVVFAFTGMALATMFVTLPFVVRELIPILENMDLSQEEAARTLGANDWQVFWNVTLPNIRWGLLYGVILCNARAMGEFGAVSVISGNIIGRTQTLTLFVESAYKEYNTEAAFAAAVLLSALALGTLWIKDKVEEAAAAESRK.

The tract at residues 1-21 (MASTTLLQPALGLPSRVGPRS) is disordered. The N-terminal 82 residues, 1-82 (MASTTLLQPA…QQSRGDLLVS (82 aa)), are a transit peptide targeting the chloroplast. Transmembrane regions (helical) follow at residues 110 to 130 (VGVA…NVFV), 156 to 176 (TLML…VAAI), 187 to 207 (VFLM…TGLM), 229 to 249 (VVFA…PFVV), and 335 to 355 (TEAA…TLWI). Positions 153 to 356 (LKMTLMLAFV…ALALGTLWIK (204 aa)) constitute an ABC transmembrane type-1 domain.

It belongs to the ATP-binding cassette (ABC) (TC 3.A.1) superfamily. Part of the chloroplast sulfate permease holocomplex. May form a heterodimer with SLUP1.

The protein resides in the plastid. It localises to the chloroplast membrane. In terms of biological role, part of the ABC-type chloroplast envelope-localized sulfate transporter. This chain is Sulfate permease 2, chloroplastic (SULP2), found in Chlamydomonas reinhardtii (Chlamydomonas smithii).